The chain runs to 404 residues: 4-hydroxy-3-methylbut-2-en-1-yl diphosphate synthase (flavodoxin) (404 aa).

Residues Cys310, Cys313, Cys345, and Glu352 each contribute to the [4Fe-4S] cluster site.

This sequence belongs to the IspG family. The cofactor is [4Fe-4S] cluster.

The catalysed reaction is (2E)-4-hydroxy-3-methylbut-2-enyl diphosphate + oxidized [flavodoxin] + H2O + 2 H(+) = 2-C-methyl-D-erythritol 2,4-cyclic diphosphate + reduced [flavodoxin]. It participates in isoprenoid biosynthesis; isopentenyl diphosphate biosynthesis via DXP pathway; isopentenyl diphosphate from 1-deoxy-D-xylulose 5-phosphate: step 5/6. In terms of biological role, converts 2C-methyl-D-erythritol 2,4-cyclodiphosphate (ME-2,4cPP) into 1-hydroxy-2-methyl-2-(E)-butenyl 4-diphosphate. The sequence is that of 4-hydroxy-3-methylbut-2-en-1-yl diphosphate synthase (flavodoxin) from Treponema pallidum (strain Nichols).